The primary structure comprises 261 residues: WW domain-binding protein 2 (261 aa).

Residues 1 to 84 (MALNKNHSEG…YLMKDCEIKQ (84 aa)) form the GRAM domain. At Y192 the chain carries Phosphotyrosine; by YES and SRC. The PPxY motif 1 signature appears at 196–200 (PPPPY). Pro residues predominate over residues 196–209 (PPPPYPGPMEPPVS). Residues 196–261 (PPPPYPGPME…YYPPEDKKTQ (66 aa)) form a disordered region. Residues 218-230 (AAEAKAAEAAASA) show a composition bias toward low complexity. Y231 carries the post-translational modification Phosphotyrosine; by YES and SRC. Positions 245–254 (SQPPPPPYYP) are enriched in pro residues. The short motif at 248-252 (PPPPY) is the PPxY motif 2 element.

In terms of assembly, binds to the WW domain of YAP1, WWP1 and WWP2. Interacts with NEDD4. Interacts with ESR1 and UBE3A. Phosphorylated in repsonse to EGF as well as estrogen and progesterone hormones. Tyr-192 and Tyr-231 are phosphorylated by YES and SRC inducing nuclear translocation. Ubiquitous.

The protein resides in the cytoplasm. It localises to the nucleus. Acts as a transcriptional coactivator of estrogen and progesterone receptors (ESR1 and PGR) upon hormone activation. In presence of estrogen, binds to ESR1-responsive promoters. Synergizes with YAP1 to enhance PGR activity. Modulates expression of post-synaptic scaffolding proteins via regulation of ESR1, ESR2 and PGR. In Homo sapiens (Human), this protein is WW domain-binding protein 2.